A 541-amino-acid chain; its full sequence is Chaperonin GroEL 2 (541 aa).

ATP is bound by residues 29 to 32 (TLGP), 86 to 90 (DGTTT), Gly413, 477 to 479 (NAA), and Asp493.

It belongs to the chaperonin (HSP60) family. As to quaternary structure, forms a cylinder of 14 subunits composed of two heptameric rings stacked back-to-back. Interacts with the co-chaperonin GroES.

The protein resides in the cytoplasm. The catalysed reaction is ATP + H2O + a folded polypeptide = ADP + phosphate + an unfolded polypeptide.. In terms of biological role, together with its co-chaperonin GroES, plays an essential role in assisting protein folding. The GroEL-GroES system forms a nano-cage that allows encapsulation of the non-native substrate proteins and provides a physical environment optimized to promote and accelerate protein folding. The sequence is that of Chaperonin GroEL 2 from Nocardioides sp. (strain ATCC BAA-499 / JS614).